We begin with the raw amino-acid sequence, 803 residues long: Zinc finger protein 226 (803 aa).

The 71-residue stretch at 8-78 (VTFKDVAVAF…TTATRRQGNL (71 aa)) folds into the KRAB domain. Residues 252-274 (YQCNECKKPFSDLSSFDLHQQLQ) form a C2H2-type 1; degenerate zinc finger. A C2H2-type 2; degenerate zinc finger spans residues 280–302 (LTCVERGKGFCYSPVLPVHQKVH). 17 consecutive C2H2-type zinc fingers follow at residues 307–329 (LKCD…QKVH), 335–357 (YKCK…CKVH), 363–385 (YNCE…QRLH), 391–413 (FKCD…QRVH), 419–441 (YKCE…QRVH), 447–469 (YKCE…QGVH), 475–497 (YICT…QRVH), 503–525 (YKCN…LVVH), 531–553 (YKCE…QKAH), 559–581 (FKCE…QLIH), 587–609 (YKCE…CRIH), 615–637 (YNCE…QRVH), 643–665 (FKCE…QKVH), 671–693 (YKCD…QRVH), 699–721 (YKCG…QSVH), 727–749 (YKCD…QRVH), and 755–777 (YKCE…HRIH). The tract at residues 781-803 (KSYKSNRGGKNIRESTQEKKSIK) is disordered. A compositionally biased stretch (basic and acidic residues) spans 791 to 803 (NIRESTQEKKSIK).

Belongs to the krueppel C2H2-type zinc-finger protein family.

It localises to the nucleus. In terms of biological role, may be involved in transcriptional regulation. The sequence is that of Zinc finger protein 226 (ZNF226) from Homo sapiens (Human).